The following is an 856-amino-acid chain: Dynamin-1 (856 aa).

A Dynamin-type G domain is found at 28 to 294 (DLDLPQIAVV…LTNHIRDTLP (267 aa)). The segment at 38–45 (GGQSAGKS) is G1 motif. Residues serine 41, glycine 43, lysine 44, serine 45, serine 46, arginine 59, and glycine 60 each contribute to the GDP site. Positions 64–66 (VTR) are G2 motif. Tyrosine 80 carries the phosphotyrosine modification. A 3'-nitrotyrosine; alternate modification is found at tyrosine 125. The residue at position 125 (tyrosine 125) is a Phosphotyrosine; alternate. Positions 136 to 139 (DLPG) are G3 motif. The tract at residues 205-208 (TKLD) is G4 motif. GDP is bound by residues lysine 206, aspartate 208, aspartate 211, asparagine 236, arginine 237, and glutamine 239. The G5 motif stretch occupies residues 235–238 (VNRS). Phosphoserine is present on residues serine 306 and serine 347. Tyrosine 354 is subject to Phosphotyrosine. A Phosphoserine modification is found at serine 512. Residues 519–625 (LVIRKGWLTI…WKASFLRAGV (107 aa)) form the PH domain. Positions 659-750 (VETIRNLVDS…IIGDINTTTV (92 aa)) constitute a GED domain. The segment at 750-856 (VSTPMPPPVD…PIGSGKSIPS (107 aa)) is disordered. Positions 763-781 (LQVQSVPTGRRSPTSSPTP) are enriched in polar residues. A phosphoserine mark is found at serine 774 and serine 778. Arginine 796 carries the omega-N-methylarginine modification. Serine 822 carries the post-translational modification Phosphoserine. A compositionally biased stretch (pro residues) spans 825–844 (PFGPPPQVPSRPNRAPPGVP).

It belongs to the TRAFAC class dynamin-like GTPase superfamily. Dynamin/Fzo/YdjA family. In terms of assembly, homodimer; homodimerization is mediated by the dynamin-type G domain which promotes assembly-stimulated GTPase activity. Homo-tetramer formed from two dimers in the absence of lipid. Oligomerizes into a helical polymer that self-assembles around the vesicle membrane, when associated to the menbrane through lipid binding. Interacts (via C-terminal proline-rich domain (PRD)) with SNX9 (via SH3 domain); this interaction allows regulation of DNM1 self-assembly during late stages of endocytic vesicle formation and supports DNM1's early functions in accelerating clathrin-coated pits (CCPs) maturation in non neuronals cell. Interacts (via C-terminal proline-rich domain (PRD)) with MYO1E (via SH3 domain); this interaction regulates receptor-mediated endocytosis. Interacts with SNX33 (via SH3 domain); this interaction decreases DNM1-dependent endocytosis. Interacts with DIAPH1. Interacts with GRB2 (via SH3 domain); this interaction mediates disassembly of DNM1 polymers, therefore modulates self-assembly. Forms a complex with BIN1 (via SH3 domain) and SH3GL2 (via SH3 domain). Forms a complex with SH3GL2 (via SH3 domain) and AMPH (via SH3 domain). Forms a complex with SH3GL2 (via SH3 domain) and SYNJ1. Interacts with AMPH. Interacts (via C-terminal proline-rich domain (PRD)) with SYT1; this interaction facilitates vesicle fission during clathrin-mediated endocytosis (CME). Interacts (via C-terminal proline-rich domain (PRD)) with PLCG1 (via SH3 domain); this interaction stimulates the release of GDP from DNM1 and enhances DNM1-dependent endocytosis. Interacts with SNPH; this interaction inhibits the binding of DNM1 to AMPH and DNM1-receptor-mediated endocytosis. Interacts with CAV1. Interacts with SH3GLB1 (via SH3 domain). Interacts with PACSIN1 (via SH3 domain), PACSIN2 (via SH3 domain) and PACSIN3 (via SH3 domain). Interacts with UNC119; this interaction decreases DNM1's GTPase activity and affects DNM1's interaction with AMPH. Interacts with AMPH. Interacts (GTP-bound form) with DNAJC6; this interaction allows clathrin-coated vesicle (CCV) formation at the plasma membrane. Phosphorylation at Ser-774 by GSK3B/GSK3-beta leads to inactivation of receptor-mediated endocytosis in non-neuronal cells. Dephosphorylation at Ser-774, through the EGFR downstream signaling, leads to activation and regulates early stages of clathrin-mediated endocytosis (CME).

It localises to the cell membrane. The protein resides in the membrane. It is found in the clathrin-coated pit. The protein localises to the cytoplasmic vesicle. Its subcellular location is the presynapse. It localises to the secretory vesicle. The protein resides in the chromaffin granule. The enzyme catalyses GTP + H2O = GDP + phosphate + H(+). In terms of biological role, catalyzes the hydrolysis of GTP and utilizes this energy to mediate vesicle scission and participates in many forms of endocytosis, such as clathrin-mediated endocytosis or synaptic vesicle endocytosis as well as rapid endocytosis (RE). Associates to the membrane, through lipid binding, and self-assembles into rings and stacks of interconnected rings through oligomerization to form a helical polymer around the vesicle membrane leading to constriction of invaginated coated pits around their necks. Self-assembly of the helical polymer induces membrane tubules narrowing until the polymer reaches a length sufficient to trigger GTP hydrolysis. Depending on the curvature imposed on the tubules, membrane detachment from the helical polymer upon GTP hydrolysis can cause spontaneous hemifission followed by complete fission. May play a role in regulating early stages of clathrin-mediated endocytosis in non-neuronal cells through its activation by dephosphorylation via the signaling downstream of EGFR. Controls vesicle size at a step before fission, during formation of membrane pits, at hippocampal synapses. Controls plastic adaptation of the synaptic vesicle recycling machinery to high levels of activity. Mediates rapid endocytosis (RE), a Ca(2+)-dependent and clathrin- and K(+)-independent process in chromaffin cells. Microtubule-associated force-producing protein involved in producing microtubule bundles and able to bind and hydrolyze GTP. Through its interaction with DNAJC6, acts during the early steps of clathrin-coated vesicle (CCV) formation. The chain is Dynamin-1 from Bos taurus (Bovine).